Consider the following 155-residue polypeptide: Deoxyuridine 5'-triphosphate nucleotidohydrolase (155 aa).

Substrate is bound by residues 74–76 (RSG), asparagine 87, and 91–93 (LID).

This sequence belongs to the dUTPase family. The cofactor is Mg(2+).

The enzyme catalyses dUTP + H2O = dUMP + diphosphate + H(+). It functions in the pathway pyrimidine metabolism; dUMP biosynthesis; dUMP from dCTP (dUTP route): step 2/2. In terms of biological role, this enzyme is involved in nucleotide metabolism: it produces dUMP, the immediate precursor of thymidine nucleotides and it decreases the intracellular concentration of dUTP so that uracil cannot be incorporated into DNA. This is Deoxyuridine 5'-triphosphate nucleotidohydrolase from Xanthomonas axonopodis pv. citri (strain 306).